Consider the following 618-residue polypeptide: Paraneoplastic antigen-like protein 5 (618 aa).

Over residues 390–399 the composition is skewed to basic and acidic residues; the sequence is AGEEGQRKES. Disordered stretches follow at residues 390-409, 451-475, and 519-549; these read AGEEGQRKESGFWAESEPDE, RDTLTKSWGSPDKGTGDMSVAEGQQ, and SMITRPQGNPDRSWDTSGSQDGEDGCSELRM.

It belongs to the PNMA family. Restricted to testis, where expression is low. Not detected in the brain.

It is found in the nucleus. The chain is Paraneoplastic antigen-like protein 5 (Pnma5) from Mus musculus (Mouse).